Reading from the N-terminus, the 264-residue chain is NADH-quinone oxidoreductase subunit B 1 (264 aa).

The [4Fe-4S] cluster site is built by C42, C43, C108, and C138.

Belongs to the complex I 20 kDa subunit family. In terms of assembly, NDH-1 is composed of 14 different subunits. Subunits NuoB, C, D, E, F, and G constitute the peripheral sector of the complex. It depends on [4Fe-4S] cluster as a cofactor.

The protein localises to the cell membrane. The catalysed reaction is a quinone + NADH + 5 H(+)(in) = a quinol + NAD(+) + 4 H(+)(out). Its function is as follows. NDH-1 shuttles electrons from NADH, via FMN and iron-sulfur (Fe-S) centers, to quinones in the respiratory chain. The immediate electron acceptor for the enzyme in this species is believed to be ubiquinone. Couples the redox reaction to proton translocation (for every two electrons transferred, four hydrogen ions are translocated across the cytoplasmic membrane), and thus conserves the redox energy in a proton gradient. The sequence is that of NADH-quinone oxidoreductase subunit B 1 from Chloroflexus aurantiacus (strain ATCC 29366 / DSM 635 / J-10-fl).